The primary structure comprises 144 residues: Large ribosomal subunit protein uL11 (144 aa).

Belongs to the universal ribosomal protein uL11 family. In terms of assembly, part of the ribosomal stalk of the 50S ribosomal subunit. Interacts with L10 and the large rRNA to form the base of the stalk. L10 forms an elongated spine to which L12 dimers bind in a sequential fashion forming a multimeric L10(L12)X complex. In terms of processing, one or more lysine residues are methylated.

In terms of biological role, forms part of the ribosomal stalk which helps the ribosome interact with GTP-bound translation factors. This chain is Large ribosomal subunit protein uL11, found in Polaromonas naphthalenivorans (strain CJ2).